A 276-amino-acid polypeptide reads, in one-letter code: UDP-3-O-acyl-N-acetylglucosamine deacetylase (276 aa).

3 residues coordinate Zn(2+): His-76, His-234, and Asp-238. The Proton donor role is filled by His-261.

It belongs to the LpxC family. The cofactor is Zn(2+).

It carries out the reaction a UDP-3-O-[(3R)-3-hydroxyacyl]-N-acetyl-alpha-D-glucosamine + H2O = a UDP-3-O-[(3R)-3-hydroxyacyl]-alpha-D-glucosamine + acetate. It functions in the pathway glycolipid biosynthesis; lipid IV(A) biosynthesis; lipid IV(A) from (3R)-3-hydroxytetradecanoyl-[acyl-carrier-protein] and UDP-N-acetyl-alpha-D-glucosamine: step 2/6. In terms of biological role, catalyzes the hydrolysis of UDP-3-O-myristoyl-N-acetylglucosamine to form UDP-3-O-myristoylglucosamine and acetate, the committed step in lipid A biosynthesis. The sequence is that of UDP-3-O-acyl-N-acetylglucosamine deacetylase from Synechocystis sp. (strain ATCC 27184 / PCC 6803 / Kazusa).